A 222-amino-acid polypeptide reads, in one-letter code: MVLLSKFDFSGKELGKFELPDAFFTEGREQSVKDYLVAIQANKRQWSACTRGRSEVSHSTKKPFRQKGTGNARQGCLAAPQFRGGGIVFGPKPKFDQHIRINKKERRAAIRLLLAQKIQTGKLIVAENSVFVSSLDAPKTKEALRFLKECNVECRGVLFVDSLAHVGSNENLRLSVRNLSAVRGFTYGENISGYDIAAARNIVVSEKALELLVESLVSTTKD.

The protein belongs to the universal ribosomal protein uL4 family. Part of the 50S ribosomal subunit.

One of the primary rRNA binding proteins, this protein initially binds near the 5'-end of the 23S rRNA. It is important during the early stages of 50S assembly. It makes multiple contacts with different domains of the 23S rRNA in the assembled 50S subunit and ribosome. Its function is as follows. Forms part of the polypeptide exit tunnel. The protein is Large ribosomal subunit protein uL4 of Chlamydia trachomatis serovar L2 (strain ATCC VR-902B / DSM 19102 / 434/Bu).